A 396-amino-acid chain; its full sequence is MAKGKFERTKPHVNVGTIGHVDHGKTTLTAAITTILSKKFGGEAKAYDQIDAAPEEKARGITINTAHVEYETATRHYAHVDCPGHADYVKNMITGAAQMDGAILVCSAADGPMPQTREHILLARQVGVPYIIVFLNKCDMVDDEELLELVEMEVRELLSKYDFPGDDIPIVKGSALKALEGDQSDIGEPAIFRLADALDSYIPTPERAIDKPFLLPIEDVFSISGRGTVVTGRVERGIVKVGEEIEIVGIKPTVKTTCTGVEMFRKLLDQGQAGDNVGVLLRGTKREDVERGQVLCKPGSITPHTHFTGEIYVLSKEEGGRHTPFFNNYRPQFYFRTTDVTGSISLPEGTEMVMPGDNVSITVKLIAPIAMEEGLRFAIREGGRTVGAGVVAKIIE.

Positions 10–206 (KPHVNVGTIG…ALDSYIPTPE (197 aa)) constitute a tr-type G domain. The interval 19 to 26 (GHVDHGKT) is G1. GTP is bound at residue 19–26 (GHVDHGKT). Mg(2+) is bound at residue T26. Residues 60 to 64 (GITIN) are G2. Residues 81–84 (DCPG) are G3. Residues 81-85 (DCPGH) and 136-139 (NKCD) contribute to the GTP site. The G4 stretch occupies residues 136-139 (NKCD). The interval 174–176 (SAL) is G5.

It belongs to the TRAFAC class translation factor GTPase superfamily. Classic translation factor GTPase family. EF-Tu/EF-1A subfamily. Monomer.

The protein localises to the cytoplasm. The catalysed reaction is GTP + H2O = GDP + phosphate + H(+). Functionally, GTP hydrolase that promotes the GTP-dependent binding of aminoacyl-tRNA to the A-site of ribosomes during protein biosynthesis. The protein is Elongation factor Tu of Azoarcus sp. (strain BH72).